The primary structure comprises 224 residues: Large ribosomal subunit protein bL25 (224 aa).

It belongs to the bacterial ribosomal protein bL25 family. CTC subfamily. In terms of assembly, part of the 50S ribosomal subunit; part of the 5S rRNA/L5/L18/L25 subcomplex. Contacts the 5S rRNA. Binds to the 5S rRNA independently of L5 and L18.

In terms of biological role, this is one of the proteins that binds to the 5S RNA in the ribosome where it forms part of the central protuberance. The sequence is that of Large ribosomal subunit protein bL25 from Psychrobacter arcticus (strain DSM 17307 / VKM B-2377 / 273-4).